The following is a 1098-amino-acid chain: Early transcription factor large subunit homolog (1098 aa).

The Helicase ATP-binding domain occupies 17–317 (KGGRAFFPCD…PNGQPLQRQQ (301 aa)). 64–71 (WQTGTGKS) contributes to the ATP binding site. The DEAH box signature appears at 246–249 (DEIH). One can recognise a Helicase C-terminal domain in the interval 489–689 (MMKDILSIIR…EGDKALRKHA (201 aa)).

The protein belongs to the DEAD box helicase family. DEAH subfamily.

It is found in the virion. The enzyme catalyses ATP + H2O = ADP + phosphate + H(+). In terms of biological role, putative initation factor. The chain is Early transcription factor large subunit homolog from African swine fever virus (isolate Tick/Malawi/Lil 20-1/1983) (ASFV).